Here is a 150-residue protein sequence, read N- to C-terminus: Ribosomal RNA large subunit methyltransferase H (150 aa).

S-adenosyl-L-methionine contacts are provided by residues Ala100 and 118–123 (LSEMTF).

Belongs to the RNA methyltransferase RlmH family. As to quaternary structure, homodimer.

It localises to the cytoplasm. The enzyme catalyses pseudouridine(1915) in 23S rRNA + S-adenosyl-L-methionine = N(3)-methylpseudouridine(1915) in 23S rRNA + S-adenosyl-L-homocysteine + H(+). Specifically methylates the pseudouridine at position 1915 (m3Psi1915) in 23S rRNA. The chain is Ribosomal RNA large subunit methyltransferase H from Helicobacter pylori (strain P12).